Consider the following 475-residue polypeptide: ISWI one complex protein 4 (475 aa).

Serine 2 bears the Phosphoserine mark. Threonine 9 carries the post-translational modification Phosphothreonine. Disordered regions lie at residues 42 to 84 (VSVH…DFGE), 181 to 296 (EEEY…IKYH), and 454 to 475 (EMDREKPSFSEDVKEEESKVGA). Serine 65 and serine 73 each carry phosphoserine. 3 stretches are compositionally biased toward acidic residues: residues 72–84 (QSEEEEDIEDFGE), 181–193 (EEEYVEEEEEENE), and 241–252 (ASEEEEEEEEEK). Position 242 is a phosphoserine (serine 242). A compositionally biased stretch (basic residues) spans 259 to 294 (KRPQRTKTKKVVVSKTKPNPKTKAKKEKPKPPKPIK). A compositionally biased stretch (basic and acidic residues) spans 456 to 475 (DREKPSFSEDVKEEESKVGA).

Component of the ISW1B complex, which at least consists of ISW1, IOC2 and IOC4.

Its subcellular location is the nucleus. Its function is as follows. Functions as a component of the ISW1B complex, which acts in remodeling the chromatin by catalyzing an ATP-dependent alteration in the structure of nucleosomal DNA. The ISW1B complex acts within coding regions to control the amount of RNA polymerase II released into productive elongation and to coordinate elongation with termination and pre-mRNA processing. This is ISWI one complex protein 4 (IOC4) from Saccharomyces cerevisiae (strain ATCC 204508 / S288c) (Baker's yeast).